The chain runs to 86 residues: Beta-toxin To4 (86 aa).

The signal sequence occupies residues 1–20 (MTRFVLFISCFFLIGMIVEC). An LCN-type CS-alpha/beta domain is found at 21–83 (KDGYLMEYGG…IWNRATNKCG (63 aa)). Intrachain disulfides connect Cys31/Cys82, Cys35/Cys57, Cys43/Cys63, and Cys47/Cys65. The residue at position 82 (Cys82) is a Cysteine amide.

This sequence belongs to the long (4 C-C) scorpion toxin superfamily. Sodium channel inhibitor family. Beta subfamily. Expressed by the venom gland.

The protein localises to the secreted. Functionally, beta toxins bind voltage-independently at site-4 of sodium channels (Nav) and shift the voltage of activation toward more negative potentials thereby affecting sodium channel activation and promoting spontaneous and repetitive firing. This toxin shows moderate inhibition of Nav1.1/SCN1A, Nav1.2/SCN2A, and Nav1.4/SCN4A, and promotes a left voltage shift on these channels. It exhibits similar potency on Nav1.2/SCN2A and Nav1.4/SCN4A (40-50% peak current inhibition at 0.5 uM), and weaker inhibition on Nav1.2 (20-30% peak current inhibition at 0.5 uM). This is Beta-toxin To4 from Tityus obscurus (Amazonian scorpion).